The following is an 849-amino-acid chain: ATP-binding cassette sub-family B member 6 (849 aa).

Residues 1 to 25 (MVRLGSYCEHNGSISQAWLDSGLSP) are Lumenal-facing. Residues 1–195 (MVRLGSYCEH…TLFLFVLGIR (195 aa)) are required for the lysosomal targeting. Positions 1–227 (MVRLGSYCEH…SQPLLRDPNQ (227 aa)) are required for ATPase activity. Cys8 and Cys26 form a disulfide bridge. N-linked (GlcNAc...) asparagine glycosylation occurs at Asn11. A helical transmembrane segment spans residues 26–46 (CFYFTLVPSVLLSFSFLLGAL). Topologically, residues 47 to 72 (QSALYARHSTTMEPKYIPRSRLYRLQ) are cytoplasmic. A helical transmembrane segment spans residues 73 to 93 (IVLSVVLILQSVIGLIWQAAG). Residues 94-98 (TDVVY) lie on the Lumenal side of the membrane. The chain crosses the membrane as a helical span at residues 99–119 (GYMIVHGCLSVVAWGFSLWLL). Topologically, residues 120-136 (HLERTRALVREKSRGHG) are cytoplasmic. The helical transmembrane segment at 137-157 (VVLLLFWALAFAAENLAFISW) threads the bilayer. Topologically, residues 158-173 (QSPNWWWLSRDTVPQK) are lumenal. The chain crosses the membrane as a helical span at residues 174–194 (VQFGLWITRYVCTLFLFVLGI). Topologically, residues 195–254 (RAPGRPRKPYIVLINEDERDVETSQPLLRDPNQSTWQGFKKKLLLVMQYIWPRRNIPLQL) are cytoplasmic. Residues 255–275 (LVALCMGLMGLERAINVFVPI) traverse the membrane as a helical segment. Residues 256 to 547 (VALCMGLMGL…FGTYYRMIQS (292 aa)) enclose the ABC transmembrane type-1 domain. Over 276–291 (YAKKIVDGLTEDSTWN) the chain is Lumenal. Residues 292–312 (ILAVTVCIYVLLKFLQGGGAG) traverse the membrane as a helical segment. Over 313–373 (TTGFLSNLRT…VDRGTSSINS (61 aa)) the chain is Cytoplasmic. The chain crosses the membrane as a helical span at residues 374-394 (LLSYIVFSILPTIADIVIGIV). Residues 395 to 401 (YFTSSFN) are Lumenal-facing. Residues 402-422 (AWFGLIIFVCMTLYLTLTIII) traverse the membrane as a helical segment. The Cytoplasmic segment spans residues 423–492 (TEWRTKYRRE…ASLAMLNQTQ (70 aa)). A helical membrane pass occupies residues 493-513 (NLIIGLGLLAGSLLCAYFVTE). Over 514–520 (NKFKVGD) the chain is Lumenal. The helical transmembrane segment at 521–541 (YVLFGTYIIQLYTPLNWFGTY) threads the bilayer. Over 542–849 (YRMIQSSFID…PPKATPRRGH (308 aa)) the chain is Cytoplasmic. Residues 581–815 (IEFENVHFSY…GGVYAGMWQK (235 aa)) form the ABC transporter domain. ATP is bound by residues Tyr590 and 614-625 (GPSGSGKSTIIR). The segment covering 814 to 825 (QKQQSGSESSSD) has biased composition (low complexity). The disordered stretch occupies residues 814 to 849 (QKQQSGSESSSDSDSERKDRTSEKLQPPKATPRRGH). Residues 827-836 (DSERKDRTSE) show a composition bias toward basic and acidic residues.

The protein belongs to the ABC transporter superfamily. ABCB family. Heavy Metal importer (TC 3.A.1.210) subfamily. Homodimer. Post-translationally, N-glycosylated.

The protein localises to the cell membrane. It is found in the mitochondrion outer membrane. The protein resides in the endoplasmic reticulum membrane. Its subcellular location is the golgi apparatus membrane. It localises to the endosome membrane. The protein localises to the lysosome membrane. It is found in the late endosome membrane. The protein resides in the early endosome membrane. Its subcellular location is the secreted. It localises to the extracellular exosome. The protein localises to the mitochondrion. It is found in the endosome. The protein resides in the multivesicular body membrane. Its subcellular location is the melanosome membrane. The catalysed reaction is heme b(in) + ATP + H2O = heme b(out) + ADP + phosphate + H(+). It carries out the reaction coproporphyrin III(in) + ATP + H2O = coproporphyrin III(out) + ADP + phosphate + H(+). The enzyme catalyses pheophorbide a(in) + ATP + H2O = pheophorbide a(out) + ADP + phosphate + H(+). It catalyses the reaction coproporphyrinogen III(in) + ATP + H2O = coproporphyrinogen III(out) + ADP + phosphate + H(+). The catalysed reaction is protoporphyrin IX(in) + ATP + H2O = protoporphyrin IX(out) + ADP + phosphate + H(+). It carries out the reaction coproporphyrin I(in) + ATP + H2O = coproporphyrin I(out) + ADP + phosphate + H(+). The enzyme catalyses uroporphyrin I(in) + ATP + H2O = uroporphyrin I(out) + ADP + phosphate + H(+). It catalyses the reaction uroporphyrin III(in) + ATP + H2O = uroporphyrin III(out) + ADP + phosphate + H(+). ATP-dependent transporter that catalyzes the transport of a broad-spectrum of porphyrins from the cytoplasm to the extracellular space through the plasma membrane or into the vesicle lumen. May also function as an ATP-dependent importer of porphyrins from the cytoplasm into the mitochondria, in turn may participate in the de novo heme biosynthesis regulation and in the coordination of heme and iron homeostasis during phenylhydrazine stress. May also play a key role in the early steps of melanogenesis producing PMEL amyloid fibrils. In vitro, it confers to cells a resistance to toxic metal such as arsenic and cadmium and against chemotherapeutics agent such as 5-fluorouracil, SN-38 and vincristin. In addition may play a role in the transition metal homeostasis. This is ATP-binding cassette sub-family B member 6 (abcb6) from Xenopus tropicalis (Western clawed frog).